An 85-amino-acid chain; its full sequence is HssA/B-like protein 62 (85 aa).

This sequence belongs to the hssA/B family.

In Dictyostelium discoideum (Social amoeba), this protein is HssA/B-like protein 62 (hssl62).